A 24-amino-acid polypeptide reads, in one-letter code: Lactadherin (24 aa).

It is found in the membrane. Its subcellular location is the secreted. The protein resides in the cytoplasmic vesicle. It localises to the secretory vesicle. The protein localises to the acrosome membrane. Functionally, specific ligand for the alpha-v/beta-3 and alpha-v/beta-5 receptors. Also binds to phosphatidylserine-enriched cell surfaces in a receptor-independent manner. Zona pellucida-binding protein which may play a role in gamete interaction. Contributes to phagocytic removal of apoptotic cells in many tissues. Plays an important role in the maintenance of intestinal epithelial homeostasis and the promotion of mucosal healing. Promotes VEGF-dependent neovascularization. In Equus asinus (Donkey), this protein is Lactadherin.